Consider the following 79-residue polypeptide: Polcalcin Bra r 1 (79 aa).

2 consecutive EF-hand domains span residues 1–36 (MADAEHERIFKKFDTDGDGKISAAELEEALKKLGSV) and 39–71 (DDVTRMMAKIDTDGDGNISFQEFTEFASANPGL). 10 residues coordinate Ca(2+): D14, D16, D18, K20, E25, D49, D51, D53, N55, and E60.

In Brassica campestris (Field mustard), this protein is Polcalcin Bra r 1.